The chain runs to 84 residues: Small ribosomal subunit protein bS16 (84 aa).

The protein belongs to the bacterial ribosomal protein bS16 family.

The polypeptide is Small ribosomal subunit protein bS16 (Ralstonia pickettii (strain 12J)).